A 378-amino-acid polypeptide reads, in one-letter code: Protein RecA (378 aa).

Residue 79-86 (GPESSGKT) participates in ATP binding.

The protein belongs to the RecA family.

The protein resides in the cytoplasm. Can catalyze the hydrolysis of ATP in the presence of single-stranded DNA, the ATP-dependent uptake of single-stranded DNA by duplex DNA, and the ATP-dependent hybridization of homologous single-stranded DNAs. It interacts with LexA causing its activation and leading to its autocatalytic cleavage. This is Protein RecA from Streptococcus equi subsp. zooepidemicus (strain H70).